We begin with the raw amino-acid sequence, 341 residues long: L-threonine 3-dehydrogenase (341 aa).

Residue C38 coordinates Zn(2+). Residues T40 and H43 each act as charge relay system in the active site. Zn(2+)-binding residues include H63, E64, C93, C96, C99, and C107. Residues I175, D195, R200, 262 to 264 (LGI), and 286 to 287 (IY) each bind NAD(+).

Belongs to the zinc-containing alcohol dehydrogenase family. As to quaternary structure, homotetramer. Zn(2+) is required as a cofactor.

Its subcellular location is the cytoplasm. The enzyme catalyses L-threonine + NAD(+) = (2S)-2-amino-3-oxobutanoate + NADH + H(+). Its pathway is amino-acid degradation; L-threonine degradation via oxydo-reductase pathway; glycine from L-threonine: step 1/2. Functionally, catalyzes the NAD(+)-dependent oxidation of L-threonine to 2-amino-3-ketobutyrate. The sequence is that of L-threonine 3-dehydrogenase from Marinomonas sp. (strain MWYL1).